The chain runs to 264 residues: ATP synthase subunit a (264 aa).

7 helical membrane-spanning segments follow: residues 41–61, 99–119, 129–149, 156–176, 194–214, 217–237, and 238–258; these read ITNIGFYLTMGAFFLLIINLL, IYFPFIYALFIFILINNLIGM, HFVLTFALSFTIVLGATILGF, FFSLLVPAGCPLGLLPLLVLI, ANILSGHMLLHILAGFTYNIM, GIIFFFLGLIPLAFIIAFSGL, and ELGIAFIQAQVFVVLTSGYIK.

Belongs to the ATPase A chain family. In terms of assembly, F-type ATPases have 2 components, CF(1) - the catalytic core - and CF(0) - the membrane proton channel. CF(1) has five subunits: alpha(3), beta(3), gamma(1), delta(1), epsilon(1). CF(0) has three main subunits: a, b and c.

Its subcellular location is the mitochondrion inner membrane. Functionally, mitochondrial membrane ATP synthase (F(1)F(0) ATP synthase or Complex V) produces ATP from ADP in the presence of a proton gradient across the membrane which is generated by electron transport complexes of the respiratory chain. F-type ATPases consist of two structural domains, F(1) - containing the extramembraneous catalytic core and F(0) - containing the membrane proton channel, linked together by a central stalk and a peripheral stalk. During catalysis, ATP synthesis in the catalytic domain of F(1) is coupled via a rotary mechanism of the central stalk subunits to proton translocation. Key component of the proton channel; it may play a direct role in the translocation of protons across the membrane. The polypeptide is ATP synthase subunit a (ATP6) (Podospora anserina (strain S / ATCC MYA-4624 / DSM 980 / FGSC 10383) (Pleurage anserina)).